The primary structure comprises 831 residues: Pleckstrin homology-like domain family B member 1 (831 aa).

Basic residues predominate over residues 1–11 (LTLGARGRRTR). The segment at 1–73 (LTLGARGRRT…PIPRERKNSI (73 aa)) is disordered. Arg-6 is modified (omega-N-methylarginine). Phosphoserine is present on residues Ser-12 and Ser-14. A Phosphothreonine modification is found at Thr-16. A phosphoserine mark is found at Ser-27, Ser-33, Ser-45, Ser-49, Ser-57, Ser-72, Ser-77, and Ser-175. Polar residues predominate over residues 39-51 (GSLTGASPRQSPH). 2 disordered regions span residues 160-209 (RSGE…LQGE) and 416-465 (NGDM…QNGT). Over residues 174–188 (ESMERSDEENLKEEC) the composition is skewed to basic and acidic residues. The stretch at 180-306 (DEENLKEECS…TETKLFEDLE (127 aa)) forms a coiled coil. Ser-421 and Ser-467 each carry phosphoserine. Residues 421–442 (SPLPRTRSGPLPSSSGSSSSSS) are compositionally biased toward low complexity. Residues 584 to 603 (SMETSISTGGNSACSPDNMS) form a disordered region. Residues 610 to 676 (MGKIEEMEKM…QQLVEKEVKL (67 aa)) adopt a coiled-coil conformation. The 104-residue stretch at 721–824 (SKVCRGYLIK…WMDVIVTGAE (104 aa)) folds into the PH domain.

In Rattus norvegicus (Rat), this protein is Pleckstrin homology-like domain family B member 1 (Phldb1).